Reading from the N-terminus, the 239-residue chain is Pyridoxine 5'-phosphate synthase (239 aa).

3-amino-2-oxopropyl phosphate is bound at residue asparagine 7. 9–10 contributes to the 1-deoxy-D-xylulose 5-phosphate binding site; it reads DH. Residue arginine 18 coordinates 3-amino-2-oxopropyl phosphate. Residue histidine 43 is the Proton acceptor of the active site. 1-deoxy-D-xylulose 5-phosphate contacts are provided by arginine 45 and histidine 50. Glutamate 70 functions as the Proton acceptor in the catalytic mechanism. Position 100 (threonine 100) interacts with 1-deoxy-D-xylulose 5-phosphate. The Proton donor role is filled by histidine 192. 3-amino-2-oxopropyl phosphate contacts are provided by residues glycine 193 and 214-215; that span reads GH.

Belongs to the PNP synthase family. Homooctamer; tetramer of dimers.

It localises to the cytoplasm. The catalysed reaction is 3-amino-2-oxopropyl phosphate + 1-deoxy-D-xylulose 5-phosphate = pyridoxine 5'-phosphate + phosphate + 2 H2O + H(+). It functions in the pathway cofactor biosynthesis; pyridoxine 5'-phosphate biosynthesis; pyridoxine 5'-phosphate from D-erythrose 4-phosphate: step 5/5. Functionally, catalyzes the complicated ring closure reaction between the two acyclic compounds 1-deoxy-D-xylulose-5-phosphate (DXP) and 3-amino-2-oxopropyl phosphate (1-amino-acetone-3-phosphate or AAP) to form pyridoxine 5'-phosphate (PNP) and inorganic phosphate. This is Pyridoxine 5'-phosphate synthase from Pelagibacter ubique (strain HTCC1062).